The chain runs to 293 residues: Epimerase family protein SDR39U1 (293 aa).

NADP(+) contacts are provided by residues 31–32, 58–59, E77, R82, and V160; these read SR and LA.

This sequence belongs to the NAD(P)-dependent epimerase/dehydratase family. SDR39U1 subfamily.

In terms of biological role, putative NADP-dependent oxidoreductase. This chain is Epimerase family protein SDR39U1 (Sdr39u1), found in Mus musculus (Mouse).